The following is a 249-amino-acid chain: tRNA pseudouridine synthase A (249 aa).

Asp53 serves as the catalytic Nucleophile. Tyr111 lines the substrate pocket.

Belongs to the tRNA pseudouridine synthase TruA family. As to quaternary structure, homodimer.

It carries out the reaction uridine(38/39/40) in tRNA = pseudouridine(38/39/40) in tRNA. Functionally, formation of pseudouridine at positions 38, 39 and 40 in the anticodon stem and loop of transfer RNAs. The polypeptide is tRNA pseudouridine synthase A (Streptococcus gordonii (strain Challis / ATCC 35105 / BCRC 15272 / CH1 / DL1 / V288)).